The following is a 100-amino-acid chain: Urease subunit gamma (100 aa).

The protein belongs to the urease gamma subunit family. As to quaternary structure, heterotrimer of UreA (gamma), UreB (beta) and UreC (alpha) subunits. Three heterotrimers associate to form the active enzyme.

Its subcellular location is the cytoplasm. It carries out the reaction urea + 2 H2O + H(+) = hydrogencarbonate + 2 NH4(+). The protein operates within nitrogen metabolism; urea degradation; CO(2) and NH(3) from urea (urease route): step 1/1. This chain is Urease subunit gamma, found in Rhodococcus opacus (strain B4).